The following is a 243-amino-acid chain: Venom nerve growth factor (243 aa).

Residues 1–18 (MSMLCYTLIIVFLIGIWA) form the signal peptide. Residues 19–125 (APKSEDNVPL…TLNRNIRAKR (107 aa)) constitute a propeptide that is removed on maturation. A compositionally biased stretch (basic and acidic residues) spans 47–66 (GLKTSRNTDQRHPAPKKAED). The disordered stretch occupies residues 47 to 69 (GLKTSRNTDQRHPAPKKAEDQEL). Intrachain disulfides connect cysteine 139-cysteine 204, cysteine 182-cysteine 232, and cysteine 192-cysteine 234. Asparagine 148 carries an N-linked (GlcNAc...) asparagine glycan.

The protein belongs to the NGF-beta family. In terms of assembly, homodimer; non-covalently linked. In terms of tissue distribution, expressed by the venom gland.

The protein resides in the secreted. Functionally, nerve growth factor is important for the development and maintenance of the sympathetic and sensory nervous systems. It stimulates division and differentiation of sympathetic and embryonic sensory neurons as well as basal forebrain cholinergic neurons in the brain. Its relevance in the snake venom is not clear. However, it has been shown to inhibit metalloproteinase-dependent proteolysis of platelet glycoprotein Ib alpha, suggesting a metalloproteinase inhibition to prevent metalloprotease autodigestion and/or protection against prey proteases. Binds a lipid between the two protein chains in the homodimer. The lipid-bound form promotes histamine relase from mouse mast cells, contrary to the lipid-free form. This Oxyuranus scutellatus scutellatus (Australian taipan) protein is Venom nerve growth factor.